A 437-amino-acid chain; its full sequence is Trigger factor (437 aa).

One can recognise a PPIase FKBP-type domain in the interval 163–248; that stretch reads GDIAVINFEG…LNQIKAKVLP (86 aa).

The protein belongs to the FKBP-type PPIase family. Tig subfamily.

The protein localises to the cytoplasm. The catalysed reaction is [protein]-peptidylproline (omega=180) = [protein]-peptidylproline (omega=0). Its function is as follows. Involved in protein export. Acts as a chaperone by maintaining the newly synthesized protein in an open conformation. Functions as a peptidyl-prolyl cis-trans isomerase. The sequence is that of Trigger factor from Bdellovibrio bacteriovorus (strain ATCC 15356 / DSM 50701 / NCIMB 9529 / HD100).